We begin with the raw amino-acid sequence, 222 residues long: uncharacterized protein (222 aa).

Residues 7–26 traverse the membrane as a helical segment; it reads ICLVSLICISGIYFGYQYYQ. An SPOR domain is found at 139–222; it reads CRSNAGYKVQ…AYNKQSCVLK (84 aa).

It is found in the membrane. This is an uncharacterized protein from Rickettsia prowazekii (strain Madrid E).